Reading from the N-terminus, the 219-residue chain is NAD(P)H-quinone oxidoreductase subunit K 2 (219 aa).

[4Fe-4S] cluster contacts are provided by Cys-53, Cys-54, Cys-118, and Cys-149.

It belongs to the complex I 20 kDa subunit family. NDH-1 can be composed of about 15 different subunits; different subcomplexes with different compositions have been identified which probably have different functions. [4Fe-4S] cluster serves as cofactor.

It localises to the cellular thylakoid membrane. The enzyme catalyses a plastoquinone + NADH + (n+1) H(+)(in) = a plastoquinol + NAD(+) + n H(+)(out). It catalyses the reaction a plastoquinone + NADPH + (n+1) H(+)(in) = a plastoquinol + NADP(+) + n H(+)(out). In terms of biological role, NDH-1 shuttles electrons from an unknown electron donor, via FMN and iron-sulfur (Fe-S) centers, to quinones in the respiratory and/or the photosynthetic chain. The immediate electron acceptor for the enzyme in this species is believed to be plastoquinone. Couples the redox reaction to proton translocation, and thus conserves the redox energy in a proton gradient. Cyanobacterial NDH-1 also plays a role in inorganic carbon-concentration. The polypeptide is NAD(P)H-quinone oxidoreductase subunit K 2 (Synechocystis sp. (strain ATCC 27184 / PCC 6803 / Kazusa)).